Consider the following 798-residue polypeptide: Penicillin-binding protein 1A (798 aa).

The Cytoplasmic segment spans residues 2 to 9 (IKKILTTC). A helical; Signal-anchor for type II membrane protein membrane pass occupies residues 10–30 (FGLFFGFCVFGVGLVAIAILV). Residues 31–798 (TYPKLPSLDS…SKQQQLDSLF (768 aa)) lie on the Periplasmic side of the membrane. The transglycosylase stretch occupies residues 50–218 (LTIYSADGEV…SAYNPIVNPE (169 aa)). Catalysis depends on glutamate 88, which acts as the Proton donor; for transglycosylase activity. Residues 378–700 (RRALGFAARA…GTIAVPVWVD (323 aa)) are transpeptidase. Serine 461 functions as the Acyl-ester intermediate; for transpeptidase activity in the catalytic mechanism. The segment at 739 to 798 (LMLDNSGIAPQPSRRAKEDDEAAVENEQQGRSDETRQDVQETPVLPSNTDSKQQQLDSLF) is disordered. The span at 766–777 (QQGRSDETRQDV) shows a compositional bias: basic and acidic residues. Positions 783–798 (LPSNTDSKQQQLDSLF) are enriched in polar residues.

In the N-terminal section; belongs to the glycosyltransferase 51 family. This sequence in the C-terminal section; belongs to the transpeptidase family.

The protein localises to the cell inner membrane. The catalysed reaction is [GlcNAc-(1-&gt;4)-Mur2Ac(oyl-L-Ala-gamma-D-Glu-L-Lys-D-Ala-D-Ala)](n)-di-trans,octa-cis-undecaprenyl diphosphate + beta-D-GlcNAc-(1-&gt;4)-Mur2Ac(oyl-L-Ala-gamma-D-Glu-L-Lys-D-Ala-D-Ala)-di-trans,octa-cis-undecaprenyl diphosphate = [GlcNAc-(1-&gt;4)-Mur2Ac(oyl-L-Ala-gamma-D-Glu-L-Lys-D-Ala-D-Ala)](n+1)-di-trans,octa-cis-undecaprenyl diphosphate + di-trans,octa-cis-undecaprenyl diphosphate + H(+). It carries out the reaction Preferential cleavage: (Ac)2-L-Lys-D-Ala-|-D-Ala. Also transpeptidation of peptidyl-alanyl moieties that are N-acyl substituents of D-alanine.. Its pathway is cell wall biogenesis; peptidoglycan biosynthesis. Functionally, cell wall formation. Synthesis of cross-linked peptidoglycan from the lipid intermediates. The enzyme has a penicillin-insensitive transglycosylase N-terminal domain (formation of linear glycan strands) and a penicillin-sensitive transpeptidase C-terminal domain (cross-linking of the peptide subunits). Essential for cell wall synthesis. In Neisseria gonorrhoeae (strain ATCC 700825 / FA 1090), this protein is Penicillin-binding protein 1A (mrcA).